Here is a 359-residue protein sequence, read N- to C-terminus: Holliday junction branch migration complex subunit RuvB (359 aa).

The segment covering 1 to 10 has biased composition (basic and acidic residues); sequence MPEHDPHQEN. The interval 1 to 20 is disordered; the sequence is MPEHDPHQENRTVSSVRLED. Residues 4 to 188 form a large ATPase domain (RuvB-L) region; that stretch reads HDPHQENRTV…FGIPLRLIFY (185 aa). ATP-binding positions include Leu27, Arg28, Gly69, Lys72, Thr73, Thr74, 135–137, Arg178, Tyr188, and Arg225; that span reads EDF. Thr73 provides a ligand contact to Mg(2+). A small ATPAse domain (RuvB-S) region spans residues 189 to 259; the sequence is TASELELIVS…TADAALQRLE (71 aa). The head domain (RuvB-H) stretch occupies residues 262 to 359; the sequence is SLGLDAMDRR…LLHRDGSADE (98 aa). 3 residues coordinate DNA: Arg298, Arg317, and Arg322.

It belongs to the RuvB family. As to quaternary structure, homohexamer. Forms an RuvA(8)-RuvB(12)-Holliday junction (HJ) complex. HJ DNA is sandwiched between 2 RuvA tetramers; dsDNA enters through RuvA and exits via RuvB. An RuvB hexamer assembles on each DNA strand where it exits the tetramer. Each RuvB hexamer is contacted by two RuvA subunits (via domain III) on 2 adjacent RuvB subunits; this complex drives branch migration. In the full resolvosome a probable DNA-RuvA(4)-RuvB(12)-RuvC(2) complex forms which resolves the HJ.

It localises to the cytoplasm. It catalyses the reaction ATP + H2O = ADP + phosphate + H(+). Its function is as follows. The RuvA-RuvB-RuvC complex processes Holliday junction (HJ) DNA during genetic recombination and DNA repair, while the RuvA-RuvB complex plays an important role in the rescue of blocked DNA replication forks via replication fork reversal (RFR). RuvA specifically binds to HJ cruciform DNA, conferring on it an open structure. The RuvB hexamer acts as an ATP-dependent pump, pulling dsDNA into and through the RuvAB complex. RuvB forms 2 homohexamers on either side of HJ DNA bound by 1 or 2 RuvA tetramers; 4 subunits per hexamer contact DNA at a time. Coordinated motions by a converter formed by DNA-disengaged RuvB subunits stimulates ATP hydrolysis and nucleotide exchange. Immobilization of the converter enables RuvB to convert the ATP-contained energy into a lever motion, pulling 2 nucleotides of DNA out of the RuvA tetramer per ATP hydrolyzed, thus driving DNA branch migration. The RuvB motors rotate together with the DNA substrate, which together with the progressing nucleotide cycle form the mechanistic basis for DNA recombination by continuous HJ branch migration. Branch migration allows RuvC to scan DNA until it finds its consensus sequence, where it cleaves and resolves cruciform DNA. This is Holliday junction branch migration complex subunit RuvB from Granulibacter bethesdensis (strain ATCC BAA-1260 / CGDNIH1).